We begin with the raw amino-acid sequence, 397 residues long: Beta-lactamase (397 aa).

The N-terminal stretch at 1 to 26 (MRDTRFPCLCGIAASTLLFATTPAIA) is a signal peptide. Residue Ser-90 is the Acyl-ester intermediate of the active site. Residues Ser-90, Gln-146, Tyr-177, Asn-179, and Asn-370 each contribute to the a beta-lactam site. Tyr-177 (proton acceptor) is an active-site residue.

The protein belongs to the class-C beta-lactamase family. As to quaternary structure, monomer.

The protein localises to the periplasm. The catalysed reaction is a beta-lactam + H2O = a substituted beta-amino acid. In terms of biological role, class C beta-lactamase which confers resistance to penicillins and cephalosporins. Has nitrocefin-hydrolyzing activity. In Pseudomonas aeruginosa (strain ATCC 15692 / DSM 22644 / CIP 104116 / JCM 14847 / LMG 12228 / 1C / PRS 101 / PAO1), this protein is Beta-lactamase (ampC).